Reading from the N-terminus, the 242-residue chain is Arginine transport ATP-binding protein ArtP (242 aa).

The ABC transporter domain occupies 3–241; it reads IQLNGINCFY…QTEAFKNYLS (239 aa). Position 35 to 42 (35 to 42) interacts with ATP; it reads GPSGAGKS.

This sequence belongs to the ABC transporter superfamily. In terms of assembly, the complex is composed of two ATP-binding proteins (ArtP), two transmembrane proteins (ArtM and ArtQ) and two solute-binding proteins (ArtJ and ArtI).

It localises to the cell inner membrane. It catalyses the reaction a polar amino acid(out) + ATP + H2O = a polar amino acid(in) + ADP + phosphate + H(+). The enzyme catalyses L-arginine(out) + ATP + H2O = L-arginine(in) + ADP + phosphate + H(+). Functionally, part of the ABC transporter complex ArtPIQMJ involved in arginine transport. Probably responsible for energy coupling to the transport system. This is Arginine transport ATP-binding protein ArtP (artP) from Escherichia coli O157:H7.